We begin with the raw amino-acid sequence, 215 residues long: Cytochrome b6 (215 aa).

A helical membrane pass occupies residues 32-52; the sequence is IFYCLGGITLTCFLVQVATGF. Position 35 (Cys35) interacts with heme c. The heme b site is built by His86 and His100. The next 3 helical transmembrane spans lie at 90 to 110, 116 to 136, and 186 to 206; these read ASMM…TGGF, LTWV…VTGY, and LHTF…FLMI. 2 residues coordinate heme b: His187 and His202.

It belongs to the cytochrome b family. PetB subfamily. The 4 large subunits of the cytochrome b6-f complex are cytochrome b6, subunit IV (17 kDa polypeptide, PetD), cytochrome f and the Rieske protein, while the 4 small subunits are PetG, PetL, PetM and PetN. The complex functions as a dimer. Requires heme b as cofactor. Heme c serves as cofactor.

The protein resides in the plastid. The protein localises to the chloroplast thylakoid membrane. Component of the cytochrome b6-f complex, which mediates electron transfer between photosystem II (PSII) and photosystem I (PSI), cyclic electron flow around PSI, and state transitions. The polypeptide is Cytochrome b6 (Klebsormidium bilatum (Filamentous green alga)).